A 442-amino-acid chain; its full sequence is D-serine dehydratase (442 aa).

K118 carries the post-translational modification N6-(pyridoxal phosphate)lysine.

Belongs to the serine/threonine dehydratase family. DsdA subfamily. Monomer. Pyridoxal 5'-phosphate serves as cofactor.

It catalyses the reaction D-serine = pyruvate + NH4(+). This Citrobacter koseri (strain ATCC BAA-895 / CDC 4225-83 / SGSC4696) protein is D-serine dehydratase.